The primary structure comprises 156 residues: Cyanate hydratase (156 aa).

Catalysis depends on residues R96, E99, and S122.

The protein belongs to the cyanase family.

It catalyses the reaction cyanate + hydrogencarbonate + 3 H(+) = NH4(+) + 2 CO2. In terms of biological role, catalyzes the reaction of cyanate with bicarbonate to produce ammonia and carbon dioxide. The polypeptide is Cyanate hydratase (Escherichia coli (strain ATCC 8739 / DSM 1576 / NBRC 3972 / NCIMB 8545 / WDCM 00012 / Crooks)).